The primary structure comprises 155 residues: Fibroblast growth factor 2 (155 aa).

Positions 1–9 (MAAGSITTL) are excised as a propeptide. Residues 1 to 20 (MAAGSITTLPALPEDGGSGA) are disordered. Asn-36 serves as a coordination point for heparin. A Cell attachment site; atypical motif is present at residues 46–48 (DGR). A Phosphotyrosine; by TEC modification is found at Tyr-82. The Cell attachment site; atypical motif lies at 88–90 (DGR). Lys-95 participates in a covalent cross-link: Glycyl lysine isopeptide (Lys-Gly) (interchain with G-Cter in SUMO1). A heparin-binding region spans residues 128-144 (KRTGQYKLGPKTGPGQK).

The protein belongs to the heparin-binding growth factors family. In terms of assembly, monomer. Homodimer. Interacts with FGFR1, FGFR2, FGFR3 and FGFR4. Affinity between fibroblast growth factors (FGFs) and their receptors is increased by heparan sulfate glycosaminoglycans that function as coreceptors. Interacts with CSPG4, FGFBP1 and TEC. Found in a complex with FGFBP1, FGF1 and FGF2. Interacts with FGFBP3. Interacts with integrin ITGAV:ITGB3; the interaction is required for FGF2 signaling. Interacts with SNORC (via the extracellular domain). Interacts with glypican GPC3. In terms of processing, phosphorylation at Tyr-82 regulates FGF2 unconventional secretion.

The protein resides in the secreted. The protein localises to the nucleus. Functionally, acts as a ligand for FGFR1, FGFR2, FGFR3 and FGFR4. Also acts as an integrin ligand which is required for FGF2 signaling. Binds to integrin ITGAV:ITGB3. Plays an important role in the regulation of cell survival, cell division, cell differentiation and cell migration. Functions as a potent mitogen in vitro. Can induce angiogenesis. Mediates phosphorylation of ERK1/2 and thereby promotes retinal lens fiber differentiation. In Bos taurus (Bovine), this protein is Fibroblast growth factor 2 (FGF2).